The chain runs to 1079 residues: Integrator complex subunit 3 homolog (1079 aa).

3 disordered regions span residues glutamate 539–proline 574, tyrosine 925–alanine 949, and alanine 1010–aspartate 1079. Residues lysine 938–alanine 949 show a composition bias toward low complexity. A phosphoserine mark is found at serine 1049, serine 1050, serine 1054, and serine 1055. Positions histidine 1062–lysine 1073 are enriched in basic residues.

It belongs to the Integrator subunit 3 family. As to quaternary structure, belongs to the multiprotein complex Integrator, at least composed of IntS1, IntS2, IntS3, IntS4, omd/IntS5, IntS6, defl/IntS7, IntS8, IntS9, IntS10, IntS11, IntS12, asun/IntS13, IntS14 and IntS15. The core complex associates with protein phosphatase 2A subunits mts/PP2A and Pp2A-29B, to form the Integrator-PP2A (INTAC) complex.

It localises to the nucleus. The protein resides in the cytoplasm. Functionally, component of the integrator complex, a multiprotein complex that terminates RNA polymerase II (Pol II) transcription in the promoter-proximal region of genes. The integrator complex provides a quality checkpoint during transcription elongation by driving premature transcription termination of transcripts that are unfavorably configured for transcriptional elongation: the complex terminates transcription by (1) catalyzing dephosphorylation of the C-terminal domain (CTD) of Pol II subunit Polr2A/Rbp1 and Spt5, and (2) degrading the exiting nascent RNA transcript via endonuclease activity. The integrator complex is also involved in the 3'-end processing of the U7 snRNA, and also the spliceosomal snRNAs U1, U2, U4 and U5. This is Integrator complex subunit 3 homolog (IntS3) from Drosophila virilis (Fruit fly).